Consider the following 129-residue polypeptide: Iron-sulfur cluster assembly 1 homolog, mitochondrial (129 aa).

The transit peptide at 1–12 (MSASLVRATVRA) directs the protein to the mitochondrion. Residues C57, C121, and C123 each coordinate Fe cation.

It belongs to the HesB/IscA family. As to quaternary structure, interacts with CRY2, but not with CRY1 (in vitro).

Its subcellular location is the mitochondrion. Its function is as follows. Involved in the maturation of mitochondrial 4Fe-4S proteins functioning late in the iron-sulfur cluster assembly pathway. Probably involved in the binding of an intermediate of Fe/S cluster assembly. The chain is Iron-sulfur cluster assembly 1 homolog, mitochondrial (ISCA1) from Bos taurus (Bovine).